The chain runs to 159 residues: 6,7-dimethyl-8-ribityllumazine synthase (159 aa).

5-amino-6-(D-ribitylamino)uracil-binding positions include Trp26, 58–60, and 80–82; these read SFE and VVI. 85–86 serves as a coordination point for (2S)-2-hydroxy-3-oxobutyl phosphate; that stretch reads GT. His88 functions as the Proton donor in the catalytic mechanism. 5-amino-6-(D-ribitylamino)uracil is bound at residue Phe113. Residue Arg127 coordinates (2S)-2-hydroxy-3-oxobutyl phosphate.

Belongs to the DMRL synthase family.

It carries out the reaction (2S)-2-hydroxy-3-oxobutyl phosphate + 5-amino-6-(D-ribitylamino)uracil = 6,7-dimethyl-8-(1-D-ribityl)lumazine + phosphate + 2 H2O + H(+). Its pathway is cofactor biosynthesis; riboflavin biosynthesis; riboflavin from 2-hydroxy-3-oxobutyl phosphate and 5-amino-6-(D-ribitylamino)uracil: step 1/2. In terms of biological role, catalyzes the formation of 6,7-dimethyl-8-ribityllumazine by condensation of 5-amino-6-(D-ribitylamino)uracil with 3,4-dihydroxy-2-butanone 4-phosphate. This is the penultimate step in the biosynthesis of riboflavin. In Renibacterium salmoninarum (strain ATCC 33209 / DSM 20767 / JCM 11484 / NBRC 15589 / NCIMB 2235), this protein is 6,7-dimethyl-8-ribityllumazine synthase.